The chain runs to 158 residues: uncharacterized protein (158 aa).

The span at Met-1–Gly-21 shows a compositional bias: polar residues. Disordered stretches follow at residues Met-1–Gly-89 and Glu-107–Thr-158. Composition is skewed to basic and acidic residues over residues His-51–Gly-68 and Glu-107–Arg-127. The segment covering Gln-128–Met-137 has biased composition (polar residues). Residues Glu-149–Thr-158 are compositionally biased toward basic and acidic residues.

This is an uncharacterized protein from Encephalitozoon cuniculi (strain GB-M1) (Microsporidian parasite).